We begin with the raw amino-acid sequence, 182 residues long: MEMASHPAVHPVALPPPYQAVGPPAPPAVRINDFPGSPGTLMGLALRFAQLGFALTALCIMVSIVGFSSVTAFCFLVAAMVLQCIWSLCLGVLDCYALLTKRSLRNSLILSFFVVGDWITSTMTFAGACAAAGITVLIDNDLNQCGPNHCNRFEAAAAMAFMSWVITTISFFLSFWILVTCR.

Residues Met1–Arg47 lie on the Cytoplasmic side of the membrane. A helical membrane pass occupies residues Phe48 to Ser68. Over Ser69–Ala72 the chain is Extracellular. A helical transmembrane segment spans residues Phe73–Leu93. Over Asp94–Asp117 the chain is Cytoplasmic. A helical transmembrane segment spans residues Trp118–Ile138. The Extracellular portion of the chain corresponds to Asp139–Ala158. A helical membrane pass occupies residues Met159 to Val179. Residues Thr180–Arg182 are Cytoplasmic-facing.

The protein belongs to the Casparian strip membrane proteins (CASP) family. Homodimer and heterodimers.

It is found in the cell membrane. This is CASP-like protein 5A1 from Physcomitrium patens (Spreading-leaved earth moss).